Here is a 248-residue protein sequence, read N- to C-terminus: MSFVVIIPARFASTRLPGKPLQDINGKPMIVHVLERARESGADRIIVATDHEDVARAVEAAGGEVCMTRADHQSGTERLAEVVEKCAFSDDTIIVNIQGDEPMIPPAIVRQVAENLAASSSGMATLAVPIHDAEEAFNPNAVKVVMDAKGYALYFSRATIPWDRDRFAQSRETIGDSLLRHIGIYGYRAGFIRRYVSWAPSPLEQIEMLEQLRVLWYGEKIHVAVAAEVPGTGVDTPEDLERVRAELR.

Belongs to the KdsB family.

The protein localises to the cytoplasm. It catalyses the reaction 3-deoxy-alpha-D-manno-oct-2-ulosonate + CTP = CMP-3-deoxy-beta-D-manno-octulosonate + diphosphate. The protein operates within nucleotide-sugar biosynthesis; CMP-3-deoxy-D-manno-octulosonate biosynthesis; CMP-3-deoxy-D-manno-octulosonate from 3-deoxy-D-manno-octulosonate and CTP: step 1/1. It participates in bacterial outer membrane biogenesis; lipopolysaccharide biosynthesis. Functionally, activates KDO (a required 8-carbon sugar) for incorporation into bacterial lipopolysaccharide in Gram-negative bacteria. This Klebsiella pneumoniae subsp. pneumoniae (strain ATCC 700721 / MGH 78578) protein is 3-deoxy-manno-octulosonate cytidylyltransferase.